The sequence spans 370 residues: Flagellar P-ring protein (370 aa).

Residues 1–21 form the signal peptide; that stretch reads MKLLLFILMISSIIIVPVGQA.

This sequence belongs to the FlgI family. The basal body constitutes a major portion of the flagellar organelle and consists of four rings (L,P,S, and M) mounted on a central rod.

Its subcellular location is the periplasm. The protein resides in the bacterial flagellum basal body. Assembles around the rod to form the L-ring and probably protects the motor/basal body from shearing forces during rotation. The sequence is that of Flagellar P-ring protein from Pseudoalteromonas atlantica (strain T6c / ATCC BAA-1087).